The primary structure comprises 386 residues: Alanine racemase 1 (386 aa).

The active-site Proton acceptor; specific for D-alanine is the K38. An N6-(pyridoxal phosphate)lysine modification is found at K38. R136 contacts substrate. The active-site Proton acceptor; specific for L-alanine is the Y267. Position 315 (M315) interacts with substrate.

Belongs to the alanine racemase family. Pyridoxal 5'-phosphate serves as cofactor.

The catalysed reaction is L-alanine = D-alanine. It functions in the pathway amino-acid biosynthesis; D-alanine biosynthesis; D-alanine from L-alanine: step 1/1. Functionally, catalyzes the interconversion of L-alanine and D-alanine. May also act on other amino acids. The chain is Alanine racemase 1 (alr1) from Clostridium acetobutylicum (strain ATCC 824 / DSM 792 / JCM 1419 / IAM 19013 / LMG 5710 / NBRC 13948 / NRRL B-527 / VKM B-1787 / 2291 / W).